The chain runs to 752 residues: Translation initiation factor IF-2 (752 aa).

Positions 148 to 159 (KKVKDKNKKEEP) are enriched in basic and acidic residues. A disordered region spans residues 148–170 (KKVKDKNKKEEPAVTPSTAPRKK). One can recognise a tr-type G domain in the interval 250 to 419 (PRPPIVTVMG…ALQAEIMELK (170 aa)). Positions 259–266 (GHVDHGKT) are G1. Position 259–266 (259–266 (GHVDHGKT)) interacts with GTP. Residues 284–288 (GITQH) form a G2 region. The segment at 305 to 308 (DTPG) is G3. Residues 305–309 (DTPGH) and 359–362 (NKID) contribute to the GTP site. Residues 359–362 (NKID) are G4. Positions 395 to 397 (SAK) are G5.

Belongs to the TRAFAC class translation factor GTPase superfamily. Classic translation factor GTPase family. IF-2 subfamily.

It is found in the cytoplasm. Its function is as follows. One of the essential components for the initiation of protein synthesis. Protects formylmethionyl-tRNA from spontaneous hydrolysis and promotes its binding to the 30S ribosomal subunits. Also involved in the hydrolysis of GTP during the formation of the 70S ribosomal complex. In Thermodesulfovibrio yellowstonii (strain ATCC 51303 / DSM 11347 / YP87), this protein is Translation initiation factor IF-2.